Here is a 469-residue protein sequence, read N- to C-terminus: Trigger factor (469 aa).

The PPIase FKBP-type domain maps to 166–245 (GDFLTIDITA…VKSVKERELP (80 aa)). A disordered region spans residues 430–469 (GGEEEAAEAEAAPAVDSDAVEGEAATEEAAPSDDPAAVKF).

This sequence belongs to the FKBP-type PPIase family. Tig subfamily.

The protein resides in the cytoplasm. It catalyses the reaction [protein]-peptidylproline (omega=180) = [protein]-peptidylproline (omega=0). Involved in protein export. Acts as a chaperone by maintaining the newly synthesized protein in an open conformation. Functions as a peptidyl-prolyl cis-trans isomerase. This is Trigger factor from Arthrobacter sp. (strain FB24).